An 89-amino-acid polypeptide reads, in one-letter code: Small ribosomal subunit protein uS19 (89 aa).

Belongs to the universal ribosomal protein uS19 family.

Functionally, protein S19 forms a complex with S13 that binds strongly to the 16S ribosomal RNA. The chain is Small ribosomal subunit protein uS19 from Xanthomonas axonopodis pv. citri (strain 306).